Here is a 163-residue protein sequence, read N- to C-terminus: Type II secretion system protein M (163 aa).

Over 1–19 (MMDKLQGWWRSISAREQRL) the chain is Cytoplasmic. A helical membrane pass occupies residues 20-40 (VAVGGSCLLIGFCYWIVWQPI). Over 41-163 (ANRIAERERQ…VRRLQLSRPQ (123 aa)) the chain is Periplasmic.

This sequence belongs to the GSP M family. As to quaternary structure, type II secretion system is composed of four main components: the outer membrane complex, the inner membrane complex, the cytoplasmic secretion ATPase and the periplasm-spanning pseudopilus. Forms homodimers. Interacts with ExeL/GspL. Interacts with ExeE/GspE and ExeF/GspF.

Its subcellular location is the cell inner membrane. In terms of biological role, inner membrane component of the type II secretion system required for the energy-dependent secretion of extracellular factors such as proteases and toxins from the periplasm. Plays a role in the complex assembly and recruits ExeL resulting in a stable complex in the inner membrane. Provides thus a link between the energy-providing ExeE protein in the cytoplasm and the rest of the T2SS machinery. The sequence is that of Type II secretion system protein M (exeM) from Aeromonas hydrophila.